Consider the following 209-residue polypeptide: High frequency lysogenization protein HflD homolog (209 aa).

The protein belongs to the HflD family.

The protein resides in the cytoplasm. It is found in the cell inner membrane. The polypeptide is High frequency lysogenization protein HflD homolog (Halorhodospira halophila (strain DSM 244 / SL1) (Ectothiorhodospira halophila (strain DSM 244 / SL1))).